A 299-amino-acid polypeptide reads, in one-letter code: 4-diphosphocytidyl-2-C-methyl-D-erythritol kinase (299 aa).

Lysine 11 is a catalytic residue. 94–104 (PQGGGLGGGSS) is a binding site for ATP. Aspartate 136 is a catalytic residue.

This sequence belongs to the GHMP kinase family. IspE subfamily.

It catalyses the reaction 4-CDP-2-C-methyl-D-erythritol + ATP = 4-CDP-2-C-methyl-D-erythritol 2-phosphate + ADP + H(+). It participates in isoprenoid biosynthesis; isopentenyl diphosphate biosynthesis via DXP pathway; isopentenyl diphosphate from 1-deoxy-D-xylulose 5-phosphate: step 3/6. Functionally, catalyzes the phosphorylation of the position 2 hydroxy group of 4-diphosphocytidyl-2C-methyl-D-erythritol. The chain is 4-diphosphocytidyl-2-C-methyl-D-erythritol kinase from Bordetella pertussis (strain Tohama I / ATCC BAA-589 / NCTC 13251).